The sequence spans 188 residues: Ribosomal RNA small subunit methyltransferase G (188 aa).

S-adenosyl-L-methionine contacts are provided by residues glycine 69, phenylalanine 74, 119 to 120, and arginine 134; that span reads VQ.

The protein belongs to the methyltransferase superfamily. RNA methyltransferase RsmG family.

It localises to the cytoplasm. It catalyses the reaction guanosine(527) in 16S rRNA + S-adenosyl-L-methionine = N(7)-methylguanosine(527) in 16S rRNA + S-adenosyl-L-homocysteine. Its function is as follows. Specifically methylates the N7 position of guanine in position 527 of 16S rRNA. The polypeptide is Ribosomal RNA small subunit methyltransferase G (Campylobacter jejuni subsp. jejuni serotype O:23/36 (strain 81-176)).